The sequence spans 446 residues: Putative hydrolase YbfO (446 aa).

The first 28 residues, 1–28, serve as a signal peptide directing secretion; that stretch reads MKRMIVRMTLPLLIVCLAFSSFSASARA.

The protein is Putative hydrolase YbfO (ybfO) of Bacillus subtilis (strain 168).